Consider the following 271-residue polypeptide: Thermoregulatory protein LcrF (271 aa).

Residues 167–265 (ERLQKFMEEN…GCTPSQARLT (99 aa)) enclose the HTH araC/xylS-type domain. DNA-binding regions (H-T-H motif) lie at residues 184–205 (SKFA…GTVY) and 232–255 (IVDI…RRRF).

Its function is as follows. Transcriptional activator of the thermally regulated virulent yopE gene. LcrF activity could be modulated by the interaction with an inducer molecule serving as a temperature messenger. The availability of the messenger would in turn be controlled by a temperature-responsive process serving as a cellular thermometer. This is Thermoregulatory protein LcrF (lcrF) from Yersinia pestis.